Consider the following 474-residue polypeptide: Melanopsin (474 aa).

The Extracellular segment spans residues 1–72 (MNSPSESRVP…VDVPDHAHYT (72 aa)). Residues N31 and N35 are each glycosylated (N-linked (GlcNAc...) asparagine). Residues 73 to 93 (LGTVILLVGLTGMLGNLTVIY) traverse the membrane as a helical segment. Residues 94 to 107 (TFCRNRGLRTPANM) lie on the Cytoplasmic side of the membrane. A helical transmembrane segment spans residues 108–128 (LIINLAVSDFLMSFTQAPVFF). Residues 129–144 (ASSLYKKWLFGETGCK) are Extracellular-facing. A disulfide bond links C143 and C221. Residues 145–165 (FYAFCGAVFGIVSMITLTAIA) traverse the membrane as a helical segment. Over 166–188 (MDRYLVITRPLATIGMRSKRRTA) the chain is Cytoplasmic. A helical membrane pass occupies residues 189 to 209 (LVLLGVWLYALAWSLPPFFGW). Residues 210 to 238 (SAYVPEGLLTSCSWDYVTFTPLVRAYTML) are Extracellular-facing. The helical transmembrane segment at 239-259 (LFCFVFFLPLLIIIFCYIFIF) threads the bilayer. At 260 to 293 (RAIRETGRACEGCGESPLRRRQWQRLQSEWKMAK) the chain is on the cytoplasmic side. A helical transmembrane segment spans residues 294–314 (VALIVILLFVLSWAPYSTVAL). The Extracellular portion of the chain corresponds to 315–355 (VGFAGYSHILTPYMSSVPAVIAKASAIHNPIIYAITHPKYR). Residue K337 is modified to N6-(retinylidene)lysine. Residues 356–372 (AAIAQHLPCLGVLLGVS) form a helical membrane-spanning segment. Over 373-474 (GQRSHPSLSY…RHLPSLDRRM (102 aa)) the chain is Cytoplasmic. The segment at 428–474 (AAQQASGQSFCSHDLEDGEVKAPSSPQEQKSKTPKTKRHLPSLDRRM) is disordered.

This sequence belongs to the G-protein coupled receptor 1 family. Opsin subfamily. Eye; expressed in a photosensitive subset of retinal ganglion cells (at protein level).

Its subcellular location is the cell membrane. The protein resides in the cell projection. The protein localises to the axon. It is found in the dendrite. It localises to the perikaryon. Photoreceptor that binds cis-retinaldehydes. Contributes to pupillar reflex, photoentrainment and other non-image forming responses to light. May be involved in the optokinetic visual tracking response. May be involved in the regulation of retinal hyaloid vessel growth and regression. The sequence is that of Melanopsin from Rattus norvegicus (Rat).